The primary structure comprises 775 residues: Subtilisin-like protease SBT1.2 (775 aa).

The signal sequence occupies residues methionine 1–serine 20. The region spanning threonine 27–valine 111 is the Inhibitor I9 domain. The Peptidase S8 domain maps to serine 116 to isoleucine 618. Residues aspartate 146 and histidine 222 each act as charge relay system in the active site. The 83-residue stretch at glycine 388–tyrosine 470 folds into the PA domain. Asparagine 472 and asparagine 544 each carry an N-linked (GlcNAc...) asparagine glycan. Catalysis depends on serine 552, which acts as the Charge relay system. An N-linked (GlcNAc...) asparagine glycan is attached at asparagine 652.

It belongs to the peptidase S8 family. Mostly expressed in leaves and cotyledons (especially in epidermal cells), and, to a lower extent, in floral buds, stems, and siliques. Strongly expressed in stomatal precursor cells (meristemoids and guard mother cells).

The protein localises to the secreted. It localises to the extracellular space. Its subcellular location is the apoplast. The protein resides in the cell membrane. Serine protease involved in the negative regulation of stomatal density and distribution. Not active on EPFL6 (AC Q1PEY6). Positive regulator of water use efficiency (WUE). The protein is Subtilisin-like protease SBT1.2 of Arabidopsis thaliana (Mouse-ear cress).